The chain runs to 1641 residues: Vitellogenin-1 (1641 aa).

The first 18 residues, 1 to 18 (MWYLAFLLIIGAYAADHA), serve as a signal peptide directing secretion. The Vitellogenin domain maps to 19 to 790 (WETGNEYHYL…SQDTTVPKSS (772 aa)). C172 and C211 are disulfide-bonded. A compositionally biased stretch (polar residues) spans 322–334 (LRQPSVSLNSMEA). The disordered stretch occupies residues 322 to 372 (LRQPSVSLNSMEARSSENSNEENRSDDDRSNFLSNSGEEREYLQSKPTLNE). The span at 342-351 (EENRSDDDRS) shows a compositional bias: basic and acidic residues. N-linked (GlcNAc...) asparagine glycans are attached at residues N344, N549, N566, N831, N875, N898, N1001, N1053, N1268, N1393, N1396, N1505, and N1523. In terms of domain architecture, VWFD spans 1410–1597 (ESVCVLDKTH…TYAMTQESCQ (188 aa)). C1435 and C1596 are joined by a disulfide. The tract at residues 1594 to 1641 (ESCQGPAPENKRKAEQSTCMSRSYRPSDVISDREAGRSSTKNRGWGYH) is disordered.

Hemolymph.

It localises to the secreted. Precursor of the egg-yolk proteins that are sources of nutrients during embryonic development. The polypeptide is Vitellogenin-1 (Solenopsis invicta (Red imported fire ant)).